The following is a 92-amino-acid chain: Progonadoliberin-1 (92 aa).

The N-terminal stretch at Met1–Ser23 is a signal peptide. Gln24 is modified (pyrrolidone carboxylic acid). Glycine amide is present on Gly33.

This sequence belongs to the GnRH family. In terms of processing, the precursor is cleaved by ACE, which removes the Gly-Lys-Arg peptide at the C-terminus, leading to mature hormone. The mature form of Gonadoliberin-1 is also cleaved and degraded by ACE. Central nervous system.

The protein resides in the secreted. Stimulates the secretion of gonadotropins; it stimulates the secretion of both luteinizing and follicle-stimulating hormones. The polypeptide is Progonadoliberin-1 (Gnrh1) (Rattus norvegicus (Rat)).